A 55-amino-acid polypeptide reads, in one-letter code: Large ribosomal subunit protein bL33 (55 aa).

It belongs to the bacterial ribosomal protein bL33 family.

In Yersinia pestis (strain Pestoides F), this protein is Large ribosomal subunit protein bL33.